The sequence spans 448 residues: Probable glycine dehydrogenase (decarboxylating) subunit 1 (448 aa).

The protein belongs to the GcvP family. N-terminal subunit subfamily. As to quaternary structure, the glycine cleavage system is composed of four proteins: P, T, L and H. In this organism, the P 'protein' is a heterodimer of two subunits.

The enzyme catalyses N(6)-[(R)-lipoyl]-L-lysyl-[glycine-cleavage complex H protein] + glycine + H(+) = N(6)-[(R)-S(8)-aminomethyldihydrolipoyl]-L-lysyl-[glycine-cleavage complex H protein] + CO2. Functionally, the glycine cleavage system catalyzes the degradation of glycine. The P protein binds the alpha-amino group of glycine through its pyridoxal phosphate cofactor; CO(2) is released and the remaining methylamine moiety is then transferred to the lipoamide cofactor of the H protein. This is Probable glycine dehydrogenase (decarboxylating) subunit 1 from Bacillus velezensis (strain DSM 23117 / BGSC 10A6 / LMG 26770 / FZB42) (Bacillus amyloliquefaciens subsp. plantarum).